We begin with the raw amino-acid sequence, 137 residues long: Profilin-3 (137 aa).

The protein belongs to the profilin family. In terms of assembly, interacts with ACTRT3. In terms of tissue distribution, detected in round spermatids.

It is found in the cytoplasm. The protein localises to the cytoskeleton. Its subcellular location is the nucleus. Binds to actin and affects the structure of the cytoskeleton. Slightly reduces actin polymerization. Binds to poly-L-proline, phosphatidylinositol 3-phosphate (PtdIns(3)P), phosphatidylinositol 4,5-bisphosphate (PtdIns(4,5)P2), and phosphatidylinositol 4-phosphate (PtdIns(4)P). May be involved in spermatogenesis. The protein is Profilin-3 (Pfn3) of Rattus norvegicus (Rat).